A 354-amino-acid polypeptide reads, in one-letter code: ATPase GET3 (354 aa).

Position 26-33 (K26–T33) interacts with ATP. D57 is a catalytic residue. ATP contacts are provided by E245 and N272. Zn(2+) contacts are provided by C285 and C288.

Belongs to the arsA ATPase family. Homodimer. Component of the Golgi to ER traffic (GET) complex, which is composed of GET1, GET2 and GET3. Within the complex, GET1 and GET2 form a heterotetramer which is stabilized by phosphatidylinositol binding and which binds to the GET3 homodimer. Interacts with the chloride channel protein GEF1.

It is found in the cytoplasm. Its subcellular location is the endoplasmic reticulum. The protein localises to the golgi apparatus. Functionally, ATPase required for the post-translational delivery of tail-anchored (TA) proteins to the endoplasmic reticulum. Recognizes and selectively binds the transmembrane domain of TA proteins in the cytosol. This complex then targets to the endoplasmic reticulum by membrane-bound receptors GET1 and GET2, where the tail-anchored protein is released for insertion. This process is regulated by ATP binding and hydrolysis. ATP binding drives the homodimer towards the closed dimer state, facilitating recognition of newly synthesized TA membrane proteins. ATP hydrolysis is required for insertion. Subsequently, the homodimer reverts towards the open dimer state, lowering its affinity for the GET1-GET2 receptor, and returning it to the cytosol to initiate a new round of targeting. Cooperates with the HDEL receptor ERD2 to mediate the ATP-dependent retrieval of resident ER proteins that contain a C-terminal H-D-E-L retention signal from the Golgi to the ER. Involved in low-level resistance to the oxyanions arsenite and arsenate, and in heat tolerance. This is ATPase GET3 from Saccharomyces cerevisiae (strain RM11-1a) (Baker's yeast).